The following is a 599-amino-acid chain: Elongation factor 4 (599 aa).

Positions 2–184 constitute a tr-type G domain; that stretch reads NHIRNFSIIA…RLVRDIPAPE (183 aa). GTP-binding positions include 14-19 and 131-134; these read DHGKST and NKID.

It belongs to the TRAFAC class translation factor GTPase superfamily. Classic translation factor GTPase family. LepA subfamily.

It localises to the cell inner membrane. It carries out the reaction GTP + H2O = GDP + phosphate + H(+). Its function is as follows. Required for accurate and efficient protein synthesis under certain stress conditions. May act as a fidelity factor of the translation reaction, by catalyzing a one-codon backward translocation of tRNAs on improperly translocated ribosomes. Back-translocation proceeds from a post-translocation (POST) complex to a pre-translocation (PRE) complex, thus giving elongation factor G a second chance to translocate the tRNAs correctly. Binds to ribosomes in a GTP-dependent manner. This Yersinia pestis (strain Pestoides F) protein is Elongation factor 4.